A 218-amino-acid polypeptide reads, in one-letter code: DNA-directed RNA polymerases IV and V subunit 5B (218 aa).

The protein belongs to the archaeal Rpo5/eukaryotic RPB5 RNA polymerase subunit family. In terms of assembly, component of the RNA polymerase IV and V complexes. Interacts with NRPD1. As to expression, expressed inleaves, flower buds, flowers and siliques.

The protein localises to the nucleus. In terms of biological role, DNA-dependent RNA polymerase catalyzes the transcription of DNA into RNA using the four ribonucleoside triphosphates as substrates. Component of RNA polymerases IV and V which mediate short-interfering RNAs (siRNA) accumulation and subsequent RNA-directed DNA methylation-dependent (RdDM) transcriptional gene silencing (TGS) of endogenous repeated sequences, including transposable elements. This Arabidopsis thaliana (Mouse-ear cress) protein is DNA-directed RNA polymerases IV and V subunit 5B (NRPD5B).